Reading from the N-terminus, the 254-residue chain is MKKHLLTLTLSSILAIPVVSHAEFKGGFADIGVHYLDWTSRTTEKSSTKSHKDDFGYLEFEGGANFSWGEMYGFFDWENFYNGRHNKPGSEQRYTFKNTNRIYLGDTGFNLYLHAYGTYGSANRVNFHDDMFLYGIGYNFTGSGWWFKPFFAKRYTDQTYYTGDNGYVAGWVAGYNFMLGSEKFTLTNWNEYEFDRDATYAAGNGGKEGLNGAVALWWNATSHITTGIQYRYADDKLGEDFYQDAIIYSIKFNF.

This sequence belongs to the nucleoside-specific channel-forming outer membrane porin (Tsx) (TC 1.B.10) family.

This is an uncharacterized protein from Escherichia coli (strain K12).